Here is a 370-residue protein sequence, read N- to C-terminus: StAR-related lipid transfer protein 7, mitochondrial (370 aa).

Residues 1 to 58 constitute a mitochondrion transit peptide; sequence MLPRRLLAAWLAGTRGGGLLALLANQCRFVTGLRVRRAQQIAQLYGRLYSESSRRVLL. Residues 86-111 are a coiled coil; it reads DEERIQEEELQRSINEMKRLEEMSNM. Disordered regions lie at residues 111-138 and 343-370; these read MFQS…EGKE and MSSE…IEYA. An START domain is found at 112 to 327; the sequence is FQSSGVQHHP…LHMATLKAKN (216 aa).

Proteolytically cleaved by PARL. As to expression, expressed in nasal epithelial cells. Down-regulated in nasal epithelial cells in patients experiencing an asthma exacerbation as compared to stable asthmatics and healthy controls.

The protein resides in the mitochondrion. In terms of biological role, may play a protective role in mucosal tissues by preventing exaggerated allergic responses. The polypeptide is StAR-related lipid transfer protein 7, mitochondrial (STARD7) (Homo sapiens (Human)).